The following is a 1299-amino-acid chain: MAP3K epsilon protein kinase 1 (1299 aa).

The 255-residue stretch at 20-274 folds into the Protein kinase domain; sequence YMLGDEIGKG…AKTLLSHPWI (255 aa). HEAT repeat units follow at residues 25–62 and 86–125; these read EIGKGAYGRVYIGLDLENGDFVAIKQVSLENIVQEDLN and LKTKTHLHIILEYVENGSLANIIKPNKFGPFPESLVTVYI. ATP-binding positions include 26–34 and lysine 49; that span reads IGKGAYGRV. Residue aspartate 144 is the Proton acceptor of the active site. The HEAT 3 repeat unit spans residues 218-256; that stretch reads PYYDLQPMPALFRIVQDDSPPIPDSLSPDITDFLRQCFK. 2 disordered regions span residues 291 to 458 and 483 to 509; these read IRYM…GNEL and GKLNEASASTPASNANQGDSPVADGGK. A compositionally biased stretch (low complexity) spans 374–385; it reads SSLQSSTCSISS. Polar residues-rich tracts occupy residues 415–432 and 488–501; these read ATKQVGKESSIQMQQRSH and ASASTPASNANQGD. HEAT repeat units lie at residues 532–570, 611–649, 653–694, 698–736, 743–780, 781–820, 868–900, 901–939, 955–994, 998–1036, 1043–1081, 1085–1122, 1125–1164, 1186–1210, 1211–1249, and 1279–1299; these read SNDGGDLFRLMMGVLKDDVIDIDGLVFDEKASPDNLLPL, VFVTQHGFLPVMDLLDSPKSRVTCAVLQLINEIIKDNID, NACL…SSSL, MFIACRGIPVLVGFLEADYAKYRSMVHLAIDGMWQVFKL, NDFCRIAAKNGILLRLINTLYSLNEATLLASEGRSGQL, DQHEALLSVIDHPDVLKTRPGGGEEPSNSQRSDLYQPDGD, QPEQVRPLLSLLEKEPPSRHVSGQLDYVKHIAG, LEKHESILPLLRASIDTMPRYFSKTMSKKVMAIEGAASA, SDTSSGLLSHMVTTLSAEVASQYLEKVADLLLEFARADTT, YMCSQSLLSRLFHMFNRVEPPILLKILKCTNHLSTDPNC, ADAIKHLIPNLEVKEGNLVDQIHHEVLSALFNLCKINKR, QAAENGIIPHLMLFVMSDSPLKQYALPLLCDMAHASRN, EQLRSHGGLDVYLSLLDDEYWSVIALDSIAVCLAQDNDNR, CPERHFVHILEPFLKIITKSSRINT, TLAVNGLTPLLIARLDHQDAIARLNLLKLIKAVYEHHPR, and QVLVKQMATSLLKALHINTVL. The disordered stretch occupies residues 795 to 852; it reads VLKTRPGGGEEPSNSQRSDLYQPDGDRPRSSSAALDATEDVKQHHRISISSNRTSTDK.

Belongs to the protein kinase superfamily. Ser/Thr protein kinase family. Post-translationally, autophosphorylated. As to expression, expressed in both the sporophytic and the gametophytic tissues, especially in dividing cells.

It is found in the cytoplasm. Its subcellular location is the cytoskeleton. The protein localises to the microtubule organizing center. It localises to the nucleus. The protein resides in the nucleolus. It is found in the cell membrane. It carries out the reaction L-seryl-[protein] + ATP = O-phospho-L-seryl-[protein] + ADP + H(+). The catalysed reaction is L-threonyl-[protein] + ATP = O-phospho-L-threonyl-[protein] + ADP + H(+). Its function is as follows. Serine/threonine-protein kinase involved in the spatial and temporal control system organizing cortical activities in mitotic and postmitotic cells. Required for the normal functioning of the plasma membrane in developing pollen. Involved in the regulation of cell expansion and embryo development. This is MAP3K epsilon protein kinase 1 from Brassica napus (Rape).